The chain runs to 578 residues: Arginine--tRNA ligase (578 aa).

Positions 122 to 132 match the 'HIGH' region motif; that stretch reads PNLAKEMHVGH.

This sequence belongs to the class-I aminoacyl-tRNA synthetase family. As to quaternary structure, monomer.

It is found in the cytoplasm. The catalysed reaction is tRNA(Arg) + L-arginine + ATP = L-arginyl-tRNA(Arg) + AMP + diphosphate. The chain is Arginine--tRNA ligase from Pseudoalteromonas atlantica (strain T6c / ATCC BAA-1087).